Reading from the N-terminus, the 290-residue chain is ATP synthase gamma chain (290 aa).

It belongs to the ATPase gamma chain family. As to quaternary structure, F-type ATPases have 2 components, CF(1) - the catalytic core - and CF(0) - the membrane proton channel. CF(1) has five subunits: alpha(3), beta(3), gamma(1), delta(1), epsilon(1). CF(0) has three main subunits: a, b and c.

The protein localises to the cell membrane. Its function is as follows. Produces ATP from ADP in the presence of a proton gradient across the membrane. The gamma chain is believed to be important in regulating ATPase activity and the flow of protons through the CF(0) complex. The sequence is that of ATP synthase gamma chain from Buchnera aphidicola subsp. Schlechtendalia chinensis.